Consider the following 338-residue polypeptide: Lipoate-protein ligase A (338 aa).

A BPL/LPL catalytic domain is found at 29 to 216 (PATQRVLFLW…AFFAHYGERV (188 aa)). ATP contacts are provided by residues Arg71, 76–79 (GAVF), and Lys134. Residue Lys134 coordinates (R)-lipoate.

It belongs to the LplA family. In terms of assembly, monomer.

It localises to the cytoplasm. It carries out the reaction L-lysyl-[lipoyl-carrier protein] + (R)-lipoate + ATP = N(6)-[(R)-lipoyl]-L-lysyl-[lipoyl-carrier protein] + AMP + diphosphate + H(+). The protein operates within protein modification; protein lipoylation via exogenous pathway; protein N(6)-(lipoyl)lysine from lipoate: step 1/2. Its pathway is protein modification; protein lipoylation via exogenous pathway; protein N(6)-(lipoyl)lysine from lipoate: step 2/2. Its function is as follows. Catalyzes both the ATP-dependent activation of exogenously supplied lipoate to lipoyl-AMP and the transfer of the activated lipoyl onto the lipoyl domains of lipoate-dependent enzymes. The polypeptide is Lipoate-protein ligase A (Escherichia coli (strain 55989 / EAEC)).